The primary structure comprises 71 residues: Small ribosomal subunit protein bS21 (71 aa).

Residues 34-44 (RREHYEKPTSE) are compositionally biased toward basic and acidic residues. The interval 34-71 (RREHYEKPTSERKRKKAAAVKRHAKKLSRDNARRTRLY) is disordered. The span at 45-59 (RKRKKAAAVKRHAKK) shows a compositional bias: basic residues. The segment covering 60-71 (LSRDNARRTRLY) has biased composition (basic and acidic residues).

The protein belongs to the bacterial ribosomal protein bS21 family.

This chain is Small ribosomal subunit protein bS21, found in Idiomarina loihiensis (strain ATCC BAA-735 / DSM 15497 / L2-TR).